The primary structure comprises 230 residues: Octanoyltransferase (230 aa).

A BPL/LPL catalytic domain is found at 31-230; the sequence is PETPDELWIC…GDKLTRYLAP (200 aa). Substrate-binding positions include 70-77, 163-165, and 176-178; these read RGGQVTYH, ALG, and GVA. Residue Cys-194 is the Acyl-thioester intermediate of the active site.

It belongs to the LipB family.

Its subcellular location is the cytoplasm. It carries out the reaction octanoyl-[ACP] + L-lysyl-[protein] = N(6)-octanoyl-L-lysyl-[protein] + holo-[ACP] + H(+). It functions in the pathway protein modification; protein lipoylation via endogenous pathway; protein N(6)-(lipoyl)lysine from octanoyl-[acyl-carrier-protein]: step 1/2. Functionally, catalyzes the transfer of endogenously produced octanoic acid from octanoyl-acyl-carrier-protein onto the lipoyl domains of lipoate-dependent enzymes. Lipoyl-ACP can also act as a substrate although octanoyl-ACP is likely to be the physiological substrate. The protein is Octanoyltransferase of Albidiferax ferrireducens (strain ATCC BAA-621 / DSM 15236 / T118) (Rhodoferax ferrireducens).